The primary structure comprises 129 residues: Small ribosomal subunit protein uS8c (129 aa).

It belongs to the universal ribosomal protein uS8 family. As to quaternary structure, part of the 30S ribosomal subunit.

The protein localises to the plastid. The protein resides in the chloroplast. Functionally, one of the primary rRNA binding proteins, it binds directly to 16S rRNA central domain where it helps coordinate assembly of the platform of the 30S subunit. The sequence is that of Small ribosomal subunit protein uS8c (rps8) from Nephroselmis olivacea (Green alga).